The following is a 297-amino-acid chain: ATP synthase subunit a (297 aa).

8 consecutive transmembrane segments (helical) span residues 38-58 (PLIPTAHVLSIFMVLFMIAIL), 77-97 (GYVLVVQLLILQFENLTVDLL), 107-127 (LFIIIFVYILISNLMSMVGGI), 133-153 (SSTVTFSLGLMSFFGTFIMGV), 174-194 (TIPLMINPLNVIGYFAPLLSI), 202-222 (VLAGSIFIALLYSLFRTFFTL), 230-250 (VGLVFGTLAGGLVIPAFHVYF), and 252-272 (ILVSAIQAFVFVSLMLTYWSQ).

Belongs to the ATPase A chain family. F-type ATPases have 2 components, CF(1) - the catalytic core - and CF(0) - the membrane proton channel. CF(1) has five subunits: alpha(3), beta(3), gamma(1), delta(1), epsilon(1). CF(0) has three main subunits: a(1), b(2) and c(9-12). The alpha and beta chains form an alternating ring which encloses part of the gamma chain. CF(1) is attached to CF(0) by a central stalk formed by the gamma and epsilon chains, while a peripheral stalk is formed by the delta and b chains.

It localises to the cell membrane. In terms of biological role, key component of the proton channel; it plays a direct role in the translocation of protons across the membrane. This Mycoplasmoides gallisepticum (strain R(low / passage 15 / clone 2)) (Mycoplasma gallisepticum) protein is ATP synthase subunit a.